Reading from the N-terminus, the 363-residue chain is UDP-3-O-acylglucosamine N-acyltransferase (363 aa).

His-252 serves as the catalytic Proton acceptor.

This sequence belongs to the transferase hexapeptide repeat family. LpxD subfamily. As to quaternary structure, homotrimer.

The enzyme catalyses a UDP-3-O-[(3R)-3-hydroxyacyl]-alpha-D-glucosamine + a (3R)-hydroxyacyl-[ACP] = a UDP-2-N,3-O-bis[(3R)-3-hydroxyacyl]-alpha-D-glucosamine + holo-[ACP] + H(+). Its pathway is bacterial outer membrane biogenesis; LPS lipid A biosynthesis. Its function is as follows. Catalyzes the N-acylation of UDP-3-O-acylglucosamine using 3-hydroxyacyl-ACP as the acyl donor. Is involved in the biosynthesis of lipid A, a phosphorylated glycolipid that anchors the lipopolysaccharide to the outer membrane of the cell. This chain is UDP-3-O-acylglucosamine N-acyltransferase, found in Cupriavidus necator (strain ATCC 17699 / DSM 428 / KCTC 22496 / NCIMB 10442 / H16 / Stanier 337) (Ralstonia eutropha).